The primary structure comprises 247 residues: Phosphatidylserine decarboxylase proenzyme (247 aa).

Residue Ser-206 is the Schiff-base intermediate with substrate; via pyruvic acid of the active site. Ser-206 is subject to Pyruvic acid (Ser); by autocatalysis.

It belongs to the phosphatidylserine decarboxylase family. PSD-A subfamily. As to quaternary structure, heterodimer of a large membrane-associated beta subunit and a small pyruvoyl-containing alpha subunit. Pyruvate is required as a cofactor. Is synthesized initially as an inactive proenzyme. Formation of the active enzyme involves a self-maturation process in which the active site pyruvoyl group is generated from an internal serine residue via an autocatalytic post-translational modification. Two non-identical subunits are generated from the proenzyme in this reaction, and the pyruvate is formed at the N-terminus of the alpha chain, which is derived from the carboxyl end of the proenzyme. The post-translation cleavage follows an unusual pathway, termed non-hydrolytic serinolysis, in which the side chain hydroxyl group of the serine supplies its oxygen atom to form the C-terminus of the beta chain, while the remainder of the serine residue undergoes an oxidative deamination to produce ammonia and the pyruvoyl prosthetic group on the alpha chain.

Its subcellular location is the cell membrane. It carries out the reaction a 1,2-diacyl-sn-glycero-3-phospho-L-serine + H(+) = a 1,2-diacyl-sn-glycero-3-phosphoethanolamine + CO2. It participates in phospholipid metabolism; phosphatidylethanolamine biosynthesis; phosphatidylethanolamine from CDP-diacylglycerol: step 2/2. In terms of biological role, catalyzes the formation of phosphatidylethanolamine (PtdEtn) from phosphatidylserine (PtdSer). This chain is Phosphatidylserine decarboxylase proenzyme, found in Nitrobacter winogradskyi (strain ATCC 25391 / DSM 10237 / CIP 104748 / NCIMB 11846 / Nb-255).